The following is a 121-amino-acid chain: Mu-hexatoxin-Mg1a (121 aa).

An N-terminal signal peptide occupies residues 1–20 (MMTLSPFLLLLIAAVVIGNA). Positions 21 to 80 (SEGEVKNEFEERLKDEFKDPSRSEVAEVILLRELEVLEETLFGKEMTSDTEENRNSREKR) are excised as a propeptide. Disulfide bonds link C81-C95, C88-C102, and C94-C116. Lysine amide is present on K120.

This sequence belongs to the neurotoxin 14 (magi-1) family. 09 (magi-1) subfamily. In terms of tissue distribution, expressed by the venom gland.

It is found in the secreted. In terms of biological role, insecticidal neurotoxin. Shows competition for site 3 of insect voltage-gated sodium channels (Nav). Induces flaccid paralysis when injected into lepidopteran larvae. Is not toxic to mice when injected intracranially at 20 pmol/g. In Macrothele gigas (Japanese funnel web spider), this protein is Mu-hexatoxin-Mg1a.